Here is a 193-residue protein sequence, read N- to C-terminus: Xanthine phosphoribosyltransferase (193 aa).

Residues Leu20 and Asn27 each contribute to the xanthine site. Position 129–133 (129–133 (ANGKA)) interacts with 5-phospho-alpha-D-ribose 1-diphosphate. Position 157 (Lys157) interacts with xanthine.

The protein belongs to the purine/pyrimidine phosphoribosyltransferase family. Xpt subfamily. Homodimer.

It localises to the cytoplasm. The enzyme catalyses XMP + diphosphate = xanthine + 5-phospho-alpha-D-ribose 1-diphosphate. Its pathway is purine metabolism; XMP biosynthesis via salvage pathway; XMP from xanthine: step 1/1. Converts the preformed base xanthine, a product of nucleic acid breakdown, to xanthosine 5'-monophosphate (XMP), so it can be reused for RNA or DNA synthesis. The protein is Xanthine phosphoribosyltransferase of Bifidobacterium animalis subsp. lactis (strain AD011).